A 420-amino-acid chain; its full sequence is Phosphoglycerate kinase, cytosolic (420 aa).

Residues valine 23, aspartate 24, phenylalanine 25, asparagine 26, arginine 39, serine 61, histidine 62, glycine 64, arginine 65, arginine 135, histidine 171, and arginine 172 each contribute to the (2R)-3-phosphoglycerate site. ADP is bound at residue glycine 217. CDP is bound at residue glycine 217. Residue lysine 219 participates in (2R)-3-phosphoglycerate binding. Lysine 219 is an AMP binding site. Aspartate 222 provides a ligand contact to CDP. Residue aspartate 222 participates in Mg(2+) binding. ADP is bound by residues lysine 223 and glycine 241. An AMP-binding site is contributed by lysine 223. ATP is bound at residue lysine 223. Glycine 241 is a CDP binding site. AMP contacts are provided by alanine 242 and alanine 314. ATP-binding residues include alanine 242 and alanine 314. Residues alanine 314 and asparagine 338 each coordinate ADP. Residues glycine 339 and phenylalanine 344 each coordinate CDP. 4 residues coordinate ADP: phenylalanine 344, glutamate 345, aspartate 377, and serine 378. Glutamate 345 is an AMP binding site. ATP contacts are provided by glutamate 345, aspartate 377, and serine 378. Aspartate 377 is a Mg(2+) binding site.

This sequence belongs to the phosphoglycerate kinase family. In terms of assembly, monomer. Mg(2+) is required as a cofactor.

The protein resides in the cytoplasm. The enzyme catalyses (2R)-3-phosphoglycerate + ATP = (2R)-3-phospho-glyceroyl phosphate + ADP. It functions in the pathway carbohydrate degradation; glycolysis; pyruvate from D-glyceraldehyde 3-phosphate: step 2/5. This chain is Phosphoglycerate kinase, cytosolic (C1PGK), found in Trypanosoma congolense.